The primary structure comprises 334 residues: Phosphoribosylformylglycinamidine cyclo-ligase (334 aa).

It belongs to the AIR synthase family.

It is found in the cytoplasm. It carries out the reaction 2-formamido-N(1)-(5-O-phospho-beta-D-ribosyl)acetamidine + ATP = 5-amino-1-(5-phospho-beta-D-ribosyl)imidazole + ADP + phosphate + H(+). It functions in the pathway purine metabolism; IMP biosynthesis via de novo pathway; 5-amino-1-(5-phospho-D-ribosyl)imidazole from N(2)-formyl-N(1)-(5-phospho-D-ribosyl)glycinamide: step 2/2. The sequence is that of Phosphoribosylformylglycinamidine cyclo-ligase from Thermococcus kodakarensis (strain ATCC BAA-918 / JCM 12380 / KOD1) (Pyrococcus kodakaraensis (strain KOD1)).